Reading from the N-terminus, the 338-residue chain is Lipoyl synthase (338 aa).

The segment at 1–24 (MTTVQEAVPNLIPTQDATPRPAPK) is disordered. Cys84, Cys89, Cys95, Cys110, Cys114, Cys117, and Ser324 together coordinate [4Fe-4S] cluster. The Radical SAM core domain occupies 96 to 313 (FSGGTATFMI…AEEGYKMGFK (218 aa)).

This sequence belongs to the radical SAM superfamily. Lipoyl synthase family. Requires [4Fe-4S] cluster as cofactor.

Its subcellular location is the cytoplasm. The enzyme catalyses [[Fe-S] cluster scaffold protein carrying a second [4Fe-4S](2+) cluster] + N(6)-octanoyl-L-lysyl-[protein] + 2 oxidized [2Fe-2S]-[ferredoxin] + 2 S-adenosyl-L-methionine + 4 H(+) = [[Fe-S] cluster scaffold protein] + N(6)-[(R)-dihydrolipoyl]-L-lysyl-[protein] + 4 Fe(3+) + 2 hydrogen sulfide + 2 5'-deoxyadenosine + 2 L-methionine + 2 reduced [2Fe-2S]-[ferredoxin]. Its pathway is protein modification; protein lipoylation via endogenous pathway; protein N(6)-(lipoyl)lysine from octanoyl-[acyl-carrier-protein]: step 2/2. Catalyzes the radical-mediated insertion of two sulfur atoms into the C-6 and C-8 positions of the octanoyl moiety bound to the lipoyl domains of lipoate-dependent enzymes, thereby converting the octanoylated domains into lipoylated derivatives. The chain is Lipoyl synthase from Pseudomonas putida (strain ATCC 700007 / DSM 6899 / JCM 31910 / BCRC 17059 / LMG 24140 / F1).